We begin with the raw amino-acid sequence, 235 residues long: Non-structural maintenance of chromosomes element 1 homolog (235 aa).

The RING-type; atypical zinc-finger motif lies at 181–225 (IKNCTLCKCLVLWDIRCGSCNIQYHRGCIQTYLQRRDICPSCGNL). Threonine 185 bears the Phosphothreonine mark.

This sequence belongs to the NSE1 family. In terms of assembly, component of the Smc5-Smc6 complex which consists at least of Smc5, Smc6, Nse1, Nse2, Nse4 and MAGE. Nse1, Nse4 and MAGE probably form a subcomplex that bridges the head domains of the Smc5-Smc6 heterodimer. Interacts with MAGE and Nse4.

The protein resides in the nucleus. The catalysed reaction is S-ubiquitinyl-[E2 ubiquitin-conjugating enzyme]-L-cysteine + [acceptor protein]-L-lysine = [E2 ubiquitin-conjugating enzyme]-L-cysteine + N(6)-ubiquitinyl-[acceptor protein]-L-lysine.. Its function is as follows. Component of the SMC5-SMC6 complex, a complex involved in repair of DNA double-strand breaks by homologous recombination. The complex may promote sister chromatid homologous recombination by recruiting the SMC1-SMC3 cohesin complex to double-strand breaks. The polypeptide is Non-structural maintenance of chromosomes element 1 homolog (Drosophila melanogaster (Fruit fly)).